The following is a 202-amino-acid chain: Small ribosomal subunit protein uS4c (202 aa).

In terms of domain architecture, S4 RNA-binding spans 90 to 154 (MRLDNIIFRL…SQSIITKNLN (65 aa)).

Belongs to the universal ribosomal protein uS4 family. Part of the 30S ribosomal subunit. Contacts protein S5. The interaction surface between S4 and S5 is involved in control of translational fidelity.

The protein localises to the plastid. It localises to the chloroplast. Its function is as follows. One of the primary rRNA binding proteins, it binds directly to 16S rRNA where it nucleates assembly of the body of the 30S subunit. In terms of biological role, with S5 and S12 plays an important role in translational accuracy. This is Small ribosomal subunit protein uS4c (rps4) from Ricciocarpos natans (Liverwort).